The sequence spans 162 residues: Caveolin-2 (162 aa).

At 1-86 the chain is on the cytoplasmic side; sequence MGLETEKADV…FEISKYVMYK (86 aa). A Phosphotyrosine; by SRC modification is found at Tyr-19. Phosphoserine occurs at positions 20 and 23. Position 27 is a phosphotyrosine; by SRC (Tyr-27). Ser-36 is subject to Phosphoserine. The segment at residues 87–107 is an intramembrane region (helical); sequence FLTVFLAIPLAFLAGILFATL. Residues 108–162 are Cytoplasmic-facing; sequence SCLHIWIIMPFVKTCLMVLPSVQTIWKSVTDAIIAPLCTSIGRSFSSVSLQLSQD.

The protein belongs to the caveolin family. As to quaternary structure, monomer or homodimer. Interacts with CAV1; the interaction forms a stable heterooligomeric complex that is required for targeting to lipid rafts and for caveolae formation. Tyrosine phosphorylated forms do not form heterooligomers with the Tyr-19-phosphorylated form existing as a monomer or dimer, and the Tyr-27-form as a monomer only. Interacts (tyrosine phosphorylated form) with the SH2 domain-containing proteins, RASA1, NCK1 and SRC. Interacts (tyrosine phosphorylated form) with INSR, the interaction (Tyr-27-phosphorylated form) is increased on insulin stimulation. Interacts (Tyr-19 phosphorylated form) with MAPK1 (phosphorylated form); the interaction, promoted by insulin, leads to nuclear location and MAPK1 activation. Interacts with STAT3; the interaction is increased on insulin-induced tyrosine phosphorylation leading to STAT activation. In terms of processing, phosphorylated on serine and tyrosine residues. CAV1 promotes phosphorylation on Ser-23 which then targets the complex to the plasma membrane, lipid rafts and caveolae. Phosphorylation on Ser-36 appears to modulate mitosis in endothelial cells. Phosphorylation on both Tyr-19 and Tyr-27 is required for insulin-induced 'Ser-727' phosphorylation of STAT3 and its activation. Phosphorylation on Tyr-19 is required for insulin-induced phosphorylation of MAPK1 and DNA binding of STAT3. Tyrosine phosphorylation is induced by both EGF and insulin (By. similarity).

The protein resides in the nucleus. Its subcellular location is the cytoplasm. It localises to the golgi apparatus membrane. It is found in the cell membrane. The protein localises to the membrane. The protein resides in the caveola. May act as a scaffolding protein within caveolar membranes. Interacts directly with G-protein alpha subunits and can functionally regulate their activity. Acts as an accessory protein in conjunction with CAV1 in targeting to lipid rafts and driving caveolae formation. The Ser-36 phosphorylated form has a role in modulating mitosis in endothelial cells. Positive regulator of cellular mitogenesis of the MAPK signaling pathway. Required for the insulin-stimulated nuclear translocation and activation of MAPK1 and STAT3, and the subsequent regulation of cell cycle progression. The polypeptide is Caveolin-2 (CAV2) (Plecturocebus moloch (Dusky titi monkey)).